The chain runs to 252 residues: MKAKVLNLKGEVTEEIELPEVFAEEFRPDIIKRAVLALQSHRRQPYGPNPLSGVDYSWENWGPGHGYARVPRWKLGRRAVVVPQAVGGRRAHPPKPERKWAEKINKKEMRKALKSAIAATANEELVRQRSHVFEGELPKVVSNELESVKRTKDVAEVFRAIGVYADVERAKERKRYRAGRGKMRGRRYVKKKSVLLVVGKDDGVVKAAKNLPGVDAVVVKDLNVELLAPGCHPGRLTVWTKSAVEYLGEWLC.

Belongs to the universal ribosomal protein uL4 family. As to quaternary structure, part of the 50S ribosomal subunit.

Functionally, one of the primary rRNA binding proteins, this protein initially binds near the 5'-end of the 23S rRNA. It is important during the early stages of 50S assembly. It makes multiple contacts with different domains of the 23S rRNA in the assembled 50S subunit and ribosome. Forms part of the polypeptide exit tunnel. This chain is Large ribosomal subunit protein uL4, found in Archaeoglobus fulgidus (strain ATCC 49558 / DSM 4304 / JCM 9628 / NBRC 100126 / VC-16).